The sequence spans 212 residues: Major fimbrial subunit (212 aa).

The N-terminal stretch at 1–18 (MKKTLLGSLILLAFATNA) is a signal peptide. Cys42 and Cys82 are oxidised to a cystine.

The protein belongs to the fimbrial protein family.

It is found in the fimbrium. Its function is as follows. Mediates adherence to oropharyngeal epithelial cells. Helps the airway colonization process. The chain is Major fimbrial subunit (hifA) from Haemophilus influenzae.